A 662-amino-acid chain; its full sequence is Sporulation protein RMD8 (662 aa).

Disordered regions lie at residues 1–136 (MSYK…RTSK), 286–320 (YELE…SFNP), and 346–406 (LKKE…QNDF). The residue at position 2 (serine 2) is an N-acetylserine. Residues 99–121 (SARREERLSSSSSDRPRQYERLS) are compositionally biased toward basic and acidic residues. A compositionally biased stretch (polar residues) spans 286–304 (YELETSGNNNNANQDTTTV). Positions 383–395 (SSRSPASPSSIST) are enriched in low complexity. The helical transmembrane segment at 630 to 647 (VTWWFILVILFGVIFSLT) threads the bilayer.

Belongs to the RMD1/sif2 family.

Its subcellular location is the membrane. Required for sporulation. The sequence is that of Sporulation protein RMD8 (RMD8) from Saccharomyces cerevisiae (strain ATCC 204508 / S288c) (Baker's yeast).